Here is a 646-residue protein sequence, read N- to C-terminus: Probable lysosomal cobalamin transporter (646 aa).

Helical transmembrane passes span 11-31 (LIWV…VITT), 42-62 (IAVS…VFLL), 102-122 (TLYT…YFWF), 149-169 (LGFV…PAAG), and 193-213 (ALTF…ILYT). The N-linked (GlcNAc...) asparagine glycan is linked to Asn-297. 2 helical membrane passes run 317–337 (LLGG…MLIT) and 380–400 (ILMA…LATI). Disordered regions lie at residues 459 to 588 (QPAA…PPRR) and 603 to 623 (VGRA…DKKE). Composition is skewed to low complexity over residues 460-490 (PAAA…SPAA) and 517-543 (PSTS…RTPR). N-linked (GlcNAc...) asparagine glycosylation is present at Asn-545. Positions 565 to 582 (APAAALARPGAISPAAPR) are enriched in low complexity. N-linked (GlcNAc...) asparagine glycosylation is present at Asn-626.

The protein belongs to the LIMR family. LMBRD1 subfamily.

Its subcellular location is the lysosome membrane. Functionally, probable lysosomal cobalamin transporter. Required to export cobalamin from lysosomes allowing its conversion to cofactors. The chain is Probable lysosomal cobalamin transporter from Chaetomium globosum (strain ATCC 6205 / CBS 148.51 / DSM 1962 / NBRC 6347 / NRRL 1970) (Soil fungus).